The chain runs to 616 residues: Chaperone protein HscA (616 aa).

Belongs to the heat shock protein 70 family.

Its function is as follows. Chaperone involved in the maturation of iron-sulfur cluster-containing proteins. Has a low intrinsic ATPase activity which is markedly stimulated by HscB. Involved in the maturation of IscU. The sequence is that of Chaperone protein HscA from Salmonella paratyphi A (strain ATCC 9150 / SARB42).